A 264-amino-acid chain; its full sequence is Elongation factor Ts (264 aa).

Residues 76–79 form an involved in Mg(2+) ion dislocation from EF-Tu region; that stretch reads TDFV.

This sequence belongs to the EF-Ts family.

Its subcellular location is the cytoplasm. Associates with the EF-Tu.GDP complex and induces the exchange of GDP to GTP. It remains bound to the aminoacyl-tRNA.EF-Tu.GTP complex up to the GTP hydrolysis stage on the ribosome. The protein is Elongation factor Ts of Deinococcus deserti (strain DSM 17065 / CIP 109153 / LMG 22923 / VCD115).